The chain runs to 267 residues: Thiazole synthase (267 aa).

Lys110 acts as the Schiff-base intermediate with DXP in catalysis. Residues Gly171, 197–198 (AG), and 219–220 (NT) contribute to the 1-deoxy-D-xylulose 5-phosphate site.

This sequence belongs to the ThiG family. Homotetramer. Forms heterodimers with either ThiH or ThiS.

Its subcellular location is the cytoplasm. It catalyses the reaction [ThiS sulfur-carrier protein]-C-terminal-Gly-aminoethanethioate + 2-iminoacetate + 1-deoxy-D-xylulose 5-phosphate = [ThiS sulfur-carrier protein]-C-terminal Gly-Gly + 2-[(2R,5Z)-2-carboxy-4-methylthiazol-5(2H)-ylidene]ethyl phosphate + 2 H2O + H(+). It participates in cofactor biosynthesis; thiamine diphosphate biosynthesis. Its function is as follows. Catalyzes the rearrangement of 1-deoxy-D-xylulose 5-phosphate (DXP) to produce the thiazole phosphate moiety of thiamine. Sulfur is provided by the thiocarboxylate moiety of the carrier protein ThiS. In vitro, sulfur can be provided by H(2)S. In Maricaulis maris (strain MCS10) (Caulobacter maris), this protein is Thiazole synthase.